We begin with the raw amino-acid sequence, 215 residues long: MNAPALSPARRTKKLPPLRVGIGGPVGSGKTTLLEMLCKAMRERYDLVAITNDIYTKEDQRLLTVAGALPEERIMGVETGGCPHTAIREDASINLEAVDRMLSRFPDADIVFIESGGDNLAATFSPELSDLTIYVIDVAGGEKIPRKGGPGITKSDLLVINKTDLAPLVGANLDVMASDTKKMRGERPYVMTNLKALEGVADVVAFIEKKGLLMV.

24–31 (GPVGSGKT) provides a ligand contact to GTP.

Belongs to the SIMIBI class G3E GTPase family. UreG subfamily. As to quaternary structure, homodimer. UreD, UreF and UreG form a complex that acts as a GTP-hydrolysis-dependent molecular chaperone, activating the urease apoprotein by helping to assemble the nickel containing metallocenter of UreC. The UreE protein probably delivers the nickel.

The protein resides in the cytoplasm. Functionally, facilitates the functional incorporation of the urease nickel metallocenter. This process requires GTP hydrolysis, probably effectuated by UreG. The chain is Urease accessory protein UreG from Burkholderia ambifaria (strain MC40-6).